Consider the following 190-residue polypeptide: Iron-sulfur protein (190 aa).

One can recognise a 4Fe-4S ferredoxin-type 1 domain in the interval 8 to 36 (VIIYANPDHCLSCHSCELACAVAHSGGHD). Positions 17, 20, 23, 27, 65, 68, 73, 77, 96, 99, 102, 106, 133, 136, 150, and 154 each coordinate [4Fe-4S] cluster. 4Fe-4S ferredoxin-type domains follow at residues 87-116 (GQVQ…VRSE) and 133-164 (CDLC…MVDL).

The carbon monoxide dehydrogenase (CODH) oxidizes carbon monoxide coupled, via CooF, to the reduction of a hydrogen cation by a hydrogenase (probably CooH). CooF is required in stoichiometric amounts in vitro for anchoring CODH to the membrane as well as for conveying the electrons to the hydrogenase. This Rhodospirillum rubrum protein is Iron-sulfur protein (cooF).